Here is a 223-residue protein sequence, read N- to C-terminus: Leucyl/phenylalanyl-tRNA--protein transferase (223 aa).

Belongs to the L/F-transferase family.

Its subcellular location is the cytoplasm. It catalyses the reaction N-terminal L-lysyl-[protein] + L-leucyl-tRNA(Leu) = N-terminal L-leucyl-L-lysyl-[protein] + tRNA(Leu) + H(+). It carries out the reaction N-terminal L-arginyl-[protein] + L-leucyl-tRNA(Leu) = N-terminal L-leucyl-L-arginyl-[protein] + tRNA(Leu) + H(+). The enzyme catalyses L-phenylalanyl-tRNA(Phe) + an N-terminal L-alpha-aminoacyl-[protein] = an N-terminal L-phenylalanyl-L-alpha-aminoacyl-[protein] + tRNA(Phe). Functions in the N-end rule pathway of protein degradation where it conjugates Leu, Phe and, less efficiently, Met from aminoacyl-tRNAs to the N-termini of proteins containing an N-terminal arginine or lysine. This chain is Leucyl/phenylalanyl-tRNA--protein transferase, found in Dinoroseobacter shibae (strain DSM 16493 / NCIMB 14021 / DFL 12).